We begin with the raw amino-acid sequence, 298 residues long: Probable endonuclease 4 (298 aa).

Positions 69, 111, 146, 180, 183, 215, 228, 230, and 260 each coordinate Zn(2+).

It belongs to the AP endonuclease 2 family. It depends on Zn(2+) as a cofactor.

The catalysed reaction is Endonucleolytic cleavage to 5'-phosphooligonucleotide end-products.. Functionally, endonuclease IV plays a role in DNA repair. It cleaves phosphodiester bonds at apurinic or apyrimidinic (AP) sites, generating a 3'-hydroxyl group and a 5'-terminal sugar phosphate. The sequence is that of Probable endonuclease 4 from Bacillus cereus (strain AH187).